The sequence spans 308 residues: D-alanine--D-alanine ligase (308 aa).

An ATP-grasp domain is found at 103-302 (KTVMATAGVP…FDELVQWMVE (200 aa)). Residue 130-184 (MAPPYVIKPVADGSSVGVFIVTEDQAHPPQELFRDDWPHGEELLVEKYIAGRELT) participates in ATP binding. Mg(2+)-binding residues include Asp-252, Glu-269, and Asn-271.

This sequence belongs to the D-alanine--D-alanine ligase family. Requires Mg(2+) as cofactor. The cofactor is Mn(2+).

The protein localises to the cytoplasm. It carries out the reaction 2 D-alanine + ATP = D-alanyl-D-alanine + ADP + phosphate + H(+). It functions in the pathway cell wall biogenesis; peptidoglycan biosynthesis. Its function is as follows. Cell wall formation. In Afipia carboxidovorans (strain ATCC 49405 / DSM 1227 / KCTC 32145 / OM5) (Oligotropha carboxidovorans), this protein is D-alanine--D-alanine ligase.